The following is a 122-amino-acid chain: Large ribosomal subunit protein uL14 (122 aa).

Belongs to the universal ribosomal protein uL14 family. In terms of assembly, part of the 50S ribosomal subunit. Forms a cluster with proteins L3 and L19. In the 70S ribosome, L14 and L19 interact and together make contacts with the 16S rRNA in bridges B5 and B8.

Functionally, binds to 23S rRNA. Forms part of two intersubunit bridges in the 70S ribosome. This is Large ribosomal subunit protein uL14 from Bartonella bacilliformis (strain ATCC 35685 / KC583 / Herrer 020/F12,63).